Reading from the N-terminus, the 1272-residue chain is Presporeless protein A (1272 aa).

The Nuclear localization signal motif lies at 146-161 (KDKRIKPIDPKKKISR). 2 disordered regions span residues 369–403 (ASTI…DDTS) and 468–490 (STSS…NQLK). Residues 374 to 392 (DGEEEDDDDDDNDVDGNDD) are compositionally biased toward acidic residues. The segment covering 393 to 403 (DNNKEKVDDTS) has biased composition (basic and acidic residues). Residues 468–487 (STSSTNTASSTRSKASSNSN) show a composition bias toward low complexity.

It is found in the nucleus. Functionally, functions autonomously, very early in the prespore pathway, to control prespore cell differentiation, maybe at the level of transcription. Also required for proper aggregation. In Dictyostelium discoideum (Social amoeba), this protein is Presporeless protein A (pslA).